A 287-amino-acid polypeptide reads, in one-letter code: Prohibitin-1 (287 aa).

The interval 102–116 (VLQLPAIYQNLGLDY) is interaction with ATG8. The AIM signature appears at 109–112 (YQNL). Positions 180 to 224 (EFTKAVEQKQIAQQDAERAKFLVEKAEQERQASVIRAEGEAESAE) form a coiled coil. The disordered stretch occupies residues 264 to 287 (SQHSGGGNSESSGSPNSLLLNIGR). The segment covering 272–287 (SESSGSPNSLLLNIGR) has biased composition (low complexity).

It belongs to the prohibitin family. The mitochondrial prohibitin complex consists of two subunits (PHB1 and PHB2). The subunits assemble into a membrane-associated ring-shaped supercomplex of approximately 1 mDa. The mitochondrial prohibitin complex interacts with the m-AAA protease, a heterohexamer composed of YTA12/RCA1 and YTA10/AFG3. The mitochondrial prohibitin complex interacts with ATG8 and the interaction may support mitophagosome assembly. In terms of processing, the N-terminus is blocked.

The protein localises to the mitochondrion inner membrane. In terms of biological role, prohibitin probably acts as a holdase/unfoldase for the stabilization of newly synthesized mitochondrial proteins. Involved in mitophagy; may act as an adapter for ATG8 that supports mitophagosome assembly. Negatively regulates the proteolytic processing of ATG32 via the i-AAA protease. Acts as a negative regulator of the m-AAA protease. The protein is Prohibitin-1 (PHB1) of Saccharomyces cerevisiae (strain ATCC 204508 / S288c) (Baker's yeast).